Consider the following 86-residue polypeptide: Large ribosomal subunit protein bL31 (86 aa).

The interval 65-86 (YGMASSDSSEQKDKSSEEKKES) is disordered. Residues 73–86 (SEQKDKSSEEKKES) show a composition bias toward basic and acidic residues.

The protein belongs to the bacterial ribosomal protein bL31 family. Type A subfamily. In terms of assembly, part of the 50S ribosomal subunit.

Its function is as follows. Binds the 23S rRNA. The protein is Large ribosomal subunit protein bL31 of Prochlorococcus marinus (strain NATL2A).